A 293-amino-acid chain; its full sequence is tRNA-cytidine(32) 2-sulfurtransferase (293 aa).

The PP-loop motif signature appears at 62–67 (SGGKDS). Residues C137, C140, and C228 each coordinate [4Fe-4S] cluster.

The protein belongs to the TtcA family. Homodimer. Mg(2+) serves as cofactor. It depends on [4Fe-4S] cluster as a cofactor.

The protein resides in the cytoplasm. The catalysed reaction is cytidine(32) in tRNA + S-sulfanyl-L-cysteinyl-[cysteine desulfurase] + AH2 + ATP = 2-thiocytidine(32) in tRNA + L-cysteinyl-[cysteine desulfurase] + A + AMP + diphosphate + H(+). Its pathway is tRNA modification. Its function is as follows. Catalyzes the ATP-dependent 2-thiolation of cytidine in position 32 of tRNA, to form 2-thiocytidine (s(2)C32). The sulfur atoms are provided by the cysteine/cysteine desulfurase (IscS) system. This Brucella abortus (strain S19) protein is tRNA-cytidine(32) 2-sulfurtransferase.